A 321-amino-acid polypeptide reads, in one-letter code: Small ribosomal subunit biogenesis GTPase RsgA (321 aa).

One can recognise a CP-type G domain in the interval 89-248 (QSWINRPPVA…VADTPGFNRP (160 aa)). GTP is bound by residues 138–141 (TKRD) and 190–198 (GPSGVGKTS). Residues C273, C278, H280, and C286 each contribute to the Zn(2+) site.

This sequence belongs to the TRAFAC class YlqF/YawG GTPase family. RsgA subfamily. As to quaternary structure, monomer. Associates with 30S ribosomal subunit, binds 16S rRNA. Zn(2+) serves as cofactor.

It is found in the cytoplasm. Functionally, one of several proteins that assist in the late maturation steps of the functional core of the 30S ribosomal subunit. Helps release RbfA from mature subunits. May play a role in the assembly of ribosomal proteins into the subunit. Circularly permuted GTPase that catalyzes slow GTP hydrolysis, GTPase activity is stimulated by the 30S ribosomal subunit. This chain is Small ribosomal subunit biogenesis GTPase RsgA, found in Prochlorococcus marinus (strain MIT 9303).